We begin with the raw amino-acid sequence, 430 residues long: Glutamate-1-semialdehyde 2,1-aminomutase (430 aa).

The residue at position 267 (lysine 267) is an N6-(pyridoxal phosphate)lysine.

Belongs to the class-III pyridoxal-phosphate-dependent aminotransferase family. HemL subfamily. Homodimer. The cofactor is pyridoxal 5'-phosphate.

Its subcellular location is the cytoplasm. The enzyme catalyses (S)-4-amino-5-oxopentanoate = 5-aminolevulinate. It functions in the pathway porphyrin-containing compound metabolism; protoporphyrin-IX biosynthesis; 5-aminolevulinate from L-glutamyl-tRNA(Glu): step 2/2. The protein is Glutamate-1-semialdehyde 2,1-aminomutase of Lawsonia intracellularis (strain PHE/MN1-00).